A 598-amino-acid polypeptide reads, in one-letter code: (-)-endo-fenchol synthase, chloroplastic (598 aa).

A chloroplast-targeting transit peptide spans 1–34 (MWSTISISMNVAILKKPLNFLHNSNNKASNPRCV). Residues Asp351, Asp355, Asp495, Thr499, and Glu503 each contribute to the Mg(2+) site. The DDXXD motif motif lies at 351–355 (DDVYD).

Belongs to the terpene synthase family. It depends on Mg(2+) as a cofactor. Requires Mn(2+) as cofactor.

It localises to the plastid. The protein resides in the chloroplast. It carries out the reaction (2E)-geranyl diphosphate + H2O = (1S,2S,4R)-endo-fenchol + diphosphate. It participates in secondary metabolite biosynthesis; terpenoid biosynthesis. Monoterpene synthase that catalyzes the formation of fenchol from geranyl diphosphate. The protein is (-)-endo-fenchol synthase, chloroplastic (FES) of Ocimum basilicum (Sweet basil).